Here is a 692-residue protein sequence, read N- to C-terminus: Centrosomal protein of 83 kDa (692 aa).

2 coiled-coil regions span residues 32 to 625 (RCEH…SLIL) and 656 to 689 (HLQEEQHQRELSLLRKRLEELETTQRKQLEELGS). The residue at position 689 (serine 689) is a Phosphoserine.

This sequence belongs to the CEP83 family. In terms of assembly, interacts with CEP164 and IFT20.

Its subcellular location is the cytoplasm. The protein resides in the cytoskeleton. The protein localises to the microtubule organizing center. It localises to the centrosome. It is found in the centriole. In terms of biological role, component of the distal appendage region of the centriole involved in the initiation of primary cilium assembly. May collaborate with IFT20 in the trafficking of ciliary membrane proteins from the Golgi complex to the cilium during the initiation of primary cilium assembly. This Mus musculus (Mouse) protein is Centrosomal protein of 83 kDa (Cep83).